Here is a 619-residue protein sequence, read N- to C-terminus: (-)-camphene synthase, chloroplastic (619 aa).

The transit peptide at 1–47 (MALVSVAPLVSMRRSLFSSPYELKSIDKTIPNLVMCRKRMSGTPSIR) directs the protein to the chloroplast. Mg(2+) is bound by residues Asp370, Asp374, and Asp522. A DDXXD motif motif is present at residues 370-374 (DDIYD).

This sequence belongs to the terpene synthase family. Tpsd subfamily. Mg(2+) serves as cofactor. It depends on Mn(2+) as a cofactor.

The protein localises to the plastid. The protein resides in the chloroplast. It catalyses the reaction (2E)-geranyl diphosphate = (1S,4R)-camphene + diphosphate. The enzyme catalyses (2E)-geranyl diphosphate = (1R,5R)-alpha-pinene + diphosphate. It carries out the reaction (2E)-geranyl diphosphate = tricyclene + diphosphate. The catalysed reaction is (2E)-geranyl diphosphate = beta-myrcene + diphosphate. It catalyses the reaction (2E)-geranyl diphosphate = (1S,5S)-beta-pinene + diphosphate. The enzyme catalyses (2E)-geranyl diphosphate = (1S,5S)-alpha-pinene + diphosphate. The protein operates within terpene metabolism; oleoresin biosynthesis. It participates in secondary metabolite biosynthesis; terpenoid biosynthesis. Functionally, monoterpene synthase (TPS) involved in the biosynthesis of monoterpene natural products included in conifer oleoresin secretions and volatile emissions; these compounds contribute to biotic and abiotic stress defense against herbivores and pathogens. Catalyzes the conversion of (2E)-geranyl diphosphate (GPP) to (-)-camphene, (+)-alpha-pinene and (-)-alpha-pinene, and, to a lower extent, to tricyclene, myrcene and (-)-beta-pinene. In Pinus contorta (Shore pine), this protein is (-)-camphene synthase, chloroplastic.